A 104-amino-acid chain; its full sequence is Endogenous retrovirus group K member 21 Rec protein (104 aa).

The tract at residues 1–48 (MHPSEMQRKAPPRRRRHRNRAPLTHKMNKMVTSEQMKLPSTKKAEPPT) is disordered. Positions 10 to 20 (APPRRRRHRNR) are enriched in basic residues. The Nuclear localization signal motif lies at 13 to 20 (RRRRHRNR). Residues 49 to 58 (WAQLKKLTQL) carry the Nuclear export signal motif.

Forms homodimers, homotrimers, and homotetramers via a C-terminal domain. Associates with XPO1 and with ZNF145.

The protein localises to the cytoplasm. Its subcellular location is the nucleus. It is found in the nucleolus. In terms of biological role, retroviral replication requires the nuclear export and translation of unspliced, singly-spliced and multiply-spliced derivatives of the initial genomic transcript. Rec interacts with a highly structured RNA element (RcRE) present in the viral 3'LTR and recruits the cellular nuclear export machinery. This permits export to the cytoplasm of unspliced genomic or incompletely spliced subgenomic viral transcripts. In Homo sapiens (Human), this protein is Endogenous retrovirus group K member 21 Rec protein (ERVK-21).